The primary structure comprises 210 residues: Cell division protein SepF (210 aa).

2 disordered regions span residues 22–72 and 79–98; these read DYYE…FDDA and RGPR…RGST. 2 stretches are compositionally biased toward basic and acidic residues: residues 37 to 60 and 79 to 88; these read RPRE…REYD and RGPREFDRTP.

The protein belongs to the SepF family. As to quaternary structure, homodimer. Interacts with FtsZ.

The protein resides in the cytoplasm. Cell division protein that is part of the divisome complex and is recruited early to the Z-ring. Probably stimulates Z-ring formation, perhaps through the cross-linking of FtsZ protofilaments. Its function overlaps with FtsA. This is Cell division protein SepF from Mycolicibacterium vanbaalenii (strain DSM 7251 / JCM 13017 / BCRC 16820 / KCTC 9966 / NRRL B-24157 / PYR-1) (Mycobacterium vanbaalenii).